Reading from the N-terminus, the 684-residue chain is DNA gyrase subunit B, novobiocin-sensitive (684 aa).

Residues 1 to 22 (MADSGNPNENTPSVATGENGEV) form a disordered region. Residues 154 to 302 (VKTDGYRWTQ…RMLSVEIAMQ (149 aa)) are novobiocin-binding. The 115-residue stretch at 463–577 (CEIFIVEGDS…AGHVYLSRPP (115 aa)) folds into the Toprim domain. Positions 469, 542, and 544 each coordinate Mg(2+).

The protein belongs to the type II topoisomerase GyrB family. Heterotetramer, composed of two GyrA and two GyrB chains. In the heterotetramer, GyrA contains the active site tyrosine that forms a transient covalent intermediate with DNA, while GyrB binds cofactors and catalyzes ATP hydrolysis. It depends on Mg(2+) as a cofactor. The cofactor is Mn(2+). Ca(2+) is required as a cofactor.

The protein resides in the cytoplasm. It carries out the reaction ATP-dependent breakage, passage and rejoining of double-stranded DNA.. Its function is as follows. A type II topoisomerase that negatively supercoils closed circular double-stranded (ds) DNA in an ATP-dependent manner to modulate DNA topology and maintain chromosomes in an underwound state. Negative supercoiling favors strand separation, and DNA replication, transcription, recombination and repair, all of which involve strand separation. Also able to catalyze the interconversion of other topological isomers of dsDNA rings, including catenanes and knotted rings. Type II topoisomerases break and join 2 DNA strands simultaneously in an ATP-dependent manner. The sequence is that of DNA gyrase subunit B, novobiocin-sensitive from Streptomyces niveus (Streptomyces spheroides).